A 286-amino-acid chain; its full sequence is 4-diphosphocytidyl-2-C-methyl-D-erythritol kinase (286 aa).

The active site involves Lys-11. Residue 93–103 (PFGAGLGGGSS) participates in ATP binding. Asp-135 is an active-site residue.

The protein belongs to the GHMP kinase family. IspE subfamily.

It catalyses the reaction 4-CDP-2-C-methyl-D-erythritol + ATP = 4-CDP-2-C-methyl-D-erythritol 2-phosphate + ADP + H(+). It participates in isoprenoid biosynthesis; isopentenyl diphosphate biosynthesis via DXP pathway; isopentenyl diphosphate from 1-deoxy-D-xylulose 5-phosphate: step 3/6. Functionally, catalyzes the phosphorylation of the position 2 hydroxy group of 4-diphosphocytidyl-2C-methyl-D-erythritol. The chain is 4-diphosphocytidyl-2-C-methyl-D-erythritol kinase from Chlorobaculum tepidum (strain ATCC 49652 / DSM 12025 / NBRC 103806 / TLS) (Chlorobium tepidum).